Consider the following 599-residue polypeptide: Elongation factor 4 (599 aa).

In terms of domain architecture, tr-type G spans 5–187; the sequence is SHIRNFSIIA…RLVHTIPAPV (183 aa). GTP is bound by residues 17-22 and 134-137; these read DHGKST and NKMD.

The protein belongs to the TRAFAC class translation factor GTPase superfamily. Classic translation factor GTPase family. LepA subfamily.

The protein localises to the cell inner membrane. It carries out the reaction GTP + H2O = GDP + phosphate + H(+). In terms of biological role, required for accurate and efficient protein synthesis under certain stress conditions. May act as a fidelity factor of the translation reaction, by catalyzing a one-codon backward translocation of tRNAs on improperly translocated ribosomes. Back-translocation proceeds from a post-translocation (POST) complex to a pre-translocation (PRE) complex, thus giving elongation factor G a second chance to translocate the tRNAs correctly. Binds to ribosomes in a GTP-dependent manner. This is Elongation factor 4 from Pseudomonas putida (strain W619).